A 541-amino-acid chain; its full sequence is Berberine bridge enzyme-like 24 (541 aa).

The N-terminal stretch at 1–32 is a signal peptide; it reads MGNSKPLPTISCIIVSVLYFSFYCITPTSSSA. C41 and C105 are oxidised to a cystine. N62 is a glycosylation site (N-linked (GlcNAc...) asparagine). Positions 83-259 constitute an FAD-binding PCMH-type domain; that stretch reads SMPKPGFIFR…LAWKIKLVPV (177 aa). The 6-(S-cysteinyl)-8alpha-(pros-histidyl)-FAD (His-Cys) cross-link spans 120 to 184; the sequence is HDFEALSYVS…KIHGFPAGLC (65 aa). N-linked (GlcNAc...) asparagine glycosylation is found at N309, N408, and N435.

The protein belongs to the oxygen-dependent FAD-linked oxidoreductase family. FAD serves as cofactor. In terms of processing, the FAD cofactor is bound via a bicovalent 6-S-cysteinyl, 8alpha-N1-histidyl FAD linkage.

It localises to the secreted. It is found in the cell wall. This is Berberine bridge enzyme-like 24 from Arabidopsis thaliana (Mouse-ear cress).